We begin with the raw amino-acid sequence, 144 residues long: Nucleoside diphosphate kinase (144 aa).

ATP is bound by residues K11, F59, R87, T93, R104, and N114. H117 (pros-phosphohistidine intermediate) is an active-site residue.

It belongs to the NDK family. In terms of assembly, homotetramer. Requires Mg(2+) as cofactor.

It is found in the cytoplasm. The enzyme catalyses a 2'-deoxyribonucleoside 5'-diphosphate + ATP = a 2'-deoxyribonucleoside 5'-triphosphate + ADP. It carries out the reaction a ribonucleoside 5'-diphosphate + ATP = a ribonucleoside 5'-triphosphate + ADP. Its function is as follows. Major role in the synthesis of nucleoside triphosphates other than ATP. The ATP gamma phosphate is transferred to the NDP beta phosphate via a ping-pong mechanism, using a phosphorylated active-site intermediate. The sequence is that of Nucleoside diphosphate kinase from Psychromonas ingrahamii (strain DSM 17664 / CCUG 51855 / 37).